A 371-amino-acid polypeptide reads, in one-letter code: Anhydro-N-acetylmuramic acid kinase (371 aa).

ATP is bound at residue 9–16 (GTSLDAVD).

It belongs to the anhydro-N-acetylmuramic acid kinase family.

It catalyses the reaction 1,6-anhydro-N-acetyl-beta-muramate + ATP + H2O = N-acetyl-D-muramate 6-phosphate + ADP + H(+). Its pathway is amino-sugar metabolism; 1,6-anhydro-N-acetylmuramate degradation. The protein operates within cell wall biogenesis; peptidoglycan recycling. Catalyzes the specific phosphorylation of 1,6-anhydro-N-acetylmuramic acid (anhMurNAc) with the simultaneous cleavage of the 1,6-anhydro ring, generating MurNAc-6-P. Is required for the utilization of anhMurNAc either imported from the medium or derived from its own cell wall murein, and thus plays a role in cell wall recycling. The chain is Anhydro-N-acetylmuramic acid kinase from Caulobacter vibrioides (strain ATCC 19089 / CIP 103742 / CB 15) (Caulobacter crescentus).